The following is a 202-amino-acid chain: Xanthine phosphoribosyltransferase (202 aa).

Positions 20 and 27 each coordinate xanthine. Ala-128–Thr-132 is a 5-phospho-alpha-D-ribose 1-diphosphate binding site. A xanthine-binding site is contributed by Lys-156.

The protein belongs to the purine/pyrimidine phosphoribosyltransferase family. Xpt subfamily. As to quaternary structure, homodimer.

It localises to the cytoplasm. The catalysed reaction is XMP + diphosphate = xanthine + 5-phospho-alpha-D-ribose 1-diphosphate. Its pathway is purine metabolism; XMP biosynthesis via salvage pathway; XMP from xanthine: step 1/1. In terms of biological role, converts the preformed base xanthine, a product of nucleic acid breakdown, to xanthosine 5'-monophosphate (XMP), so it can be reused for RNA or DNA synthesis. In Deinococcus geothermalis (strain DSM 11300 / CIP 105573 / AG-3a), this protein is Xanthine phosphoribosyltransferase.